A 654-amino-acid chain; its full sequence is tRNA 5-methylaminomethyl-2-thiouridine biosynthesis bifunctional protein MnmC (654 aa).

The segment at 1–235 (MSDFQHAQLD…KREMLGGTYQ (235 aa)) is tRNA (mnm(5)s(2)U34)-methyltransferase. The tract at residues 261–654 (VGGGLAGCAS…LRDLVRGQRG (394 aa)) is FAD-dependent cmnm(5)s(2)U34 oxidoreductase.

It in the N-terminal section; belongs to the methyltransferase superfamily. tRNA (mnm(5)s(2)U34)-methyltransferase family. This sequence in the C-terminal section; belongs to the DAO family. FAD serves as cofactor.

The protein resides in the cytoplasm. The catalysed reaction is 5-aminomethyl-2-thiouridine(34) in tRNA + S-adenosyl-L-methionine = 5-methylaminomethyl-2-thiouridine(34) in tRNA + S-adenosyl-L-homocysteine + H(+). Catalyzes the last two steps in the biosynthesis of 5-methylaminomethyl-2-thiouridine (mnm(5)s(2)U) at the wobble position (U34) in tRNA. Catalyzes the FAD-dependent demodification of cmnm(5)s(2)U34 to nm(5)s(2)U34, followed by the transfer of a methyl group from S-adenosyl-L-methionine to nm(5)s(2)U34, to form mnm(5)s(2)U34. This Pseudomonas paraeruginosa (strain DSM 24068 / PA7) (Pseudomonas aeruginosa (strain PA7)) protein is tRNA 5-methylaminomethyl-2-thiouridine biosynthesis bifunctional protein MnmC.